We begin with the raw amino-acid sequence, 534 residues long: MSNANLRKWVGFCFVAIYLFLGVPLWYKLTTVYRASLPINYIESLQNNKFQDIHLVIPVYVKSDTYRFPDVHDAIQVQVNHLLNSQEQRVPWSLQVLPYNETIEQMESEGNQFHVVTLKLDEFIGYSSAYDTKETLVYYDDAAVLSNDLPFFVAQTLVEHTFQLEWTHLNKTCEGVSTNNDVAISYDPNIHLSVTLLSGDGNPVAWEIEPTLTDYFSPFRKFLSPLVNFTVDSSIVYHNDLNLHSLNGSCTSVTWFDLSHTIDLSELSSMAYYPEDSALNLAIVFPSASSSPDGLAFINGTRISDEITTLDWNSYLVPQWGVIIINKMPLKPNSVISEDYLEPMMYRFATDIFQLLGLTEGSQDLLSPYITIDSFKRLTILQNLDKATETLWSLVKLTQQFQGMSIPREVSDNVIEALDLRLQIIDLLNDPGKGGDIVWNNALHLSNELVKLCEKAFFNGEMVQQNFFPQEHMIAVYLPLLGPISAVMFFGFYNVMKEKNQKSKKNGTEREVAKEKLELKEAQKLHAIDGEDEL.

The Cytoplasmic portion of the chain corresponds to 1 to 8; the sequence is MSNANLRK. A helical transmembrane segment spans residues 9–29; it reads WVGFCFVAIYLFLGVPLWYKL. At 30–472 the chain is on the lumenal side; sequence TTVYRASLPI…VQQNFFPQEH (443 aa). Residues N100, N170, N228, N247, and N299 are each glycosylated (N-linked (GlcNAc...) asparagine). A helical membrane pass occupies residues 473-493; the sequence is MIAVYLPLLGPISAVMFFGFY. Over 494–534 the chain is Cytoplasmic; that stretch reads NVMKEKNQKSKKNGTEREVAKEKLELKEAQKLHAIDGEDEL.

It belongs to the PIGS family. In terms of assembly, forms a complex with CDC91, GPI16, GPI8 and GAA1. In terms of processing, N-glycosylated.

The protein localises to the endoplasmic reticulum membrane. It participates in glycolipid biosynthesis; glycosylphosphatidylinositol-anchor biosynthesis. Component of the GPI transamidase complex. Involved in transfer of GPI to proteins. The protein is GPI transamidase component GPI17 (GPI17) of Saccharomyces cerevisiae (strain ATCC 204508 / S288c) (Baker's yeast).